Reading from the N-terminus, the 224-residue chain is 2,5-diamino-6-ribosylamino-4(3H)-pyrimidinone 5'-phosphate reductase (224 aa).

Residues G16, T57, D61, 83-86, V134, and 156-159 contribute to the NADP(+) site; these read SKLR and GGTL.

Belongs to the HTP reductase family. In terms of assembly, homodimer.

It carries out the reaction 2,5-diamino-6-(1-D-ribitylamino)pyrimidin-4(3H)-one 5'-phosphate + NADP(+) = 2,5-diamino-6-(1-D-ribosylamino)pyrimidin-4(3H)-one 5'-phosphate + NADPH + H(+). The enzyme catalyses 2,5-diamino-6-(1-D-ribitylamino)pyrimidin-4(3H)-one 5'-phosphate + NAD(+) = 2,5-diamino-6-(1-D-ribosylamino)pyrimidin-4(3H)-one 5'-phosphate + NADH + H(+). The protein operates within cofactor biosynthesis; riboflavin biosynthesis. Catalyzes an early step in riboflavin biosynthesis, the NAD(P)H-dependent reduction of the ribose side chain of 2,5-diamino-6-ribosylamino-4(3H)-pyrimidinone 5'-phosphate, yielding 2,5-diamino-6-ribitylamino-4(3H)-pyrimidinone 5'-phosphate. The beta anomer is the authentic substrate, and the alpha anomer can serve as substrate subsequent to spontaneous anomerization. NADPH and NADH function equally well as the reductants. Does not catalyze the reduction of 5-amino-6-(5-phospho-D-ribosylamino)uracil to 5-amino-6-(5-phospho-D-ribitylamino)uracil. The sequence is that of 2,5-diamino-6-ribosylamino-4(3H)-pyrimidinone 5'-phosphate reductase (arfC) from Methanocaldococcus jannaschii (strain ATCC 43067 / DSM 2661 / JAL-1 / JCM 10045 / NBRC 100440) (Methanococcus jannaschii).